Reading from the N-terminus, the 472-residue chain is 3-isopropylmalate dehydratase large subunit (472 aa).

[4Fe-4S] cluster-binding residues include C347, C407, and C410.

This sequence belongs to the aconitase/IPM isomerase family. LeuC type 1 subfamily. In terms of assembly, heterodimer of LeuC and LeuD. [4Fe-4S] cluster serves as cofactor.

It catalyses the reaction (2R,3S)-3-isopropylmalate = (2S)-2-isopropylmalate. The protein operates within amino-acid biosynthesis; L-leucine biosynthesis; L-leucine from 3-methyl-2-oxobutanoate: step 2/4. Functionally, catalyzes the isomerization between 2-isopropylmalate and 3-isopropylmalate, via the formation of 2-isopropylmaleate. This is 3-isopropylmalate dehydratase large subunit from Parasynechococcus marenigrum (strain WH8102).